Here is a 91-residue protein sequence, read N- to C-terminus: uncharacterized protein (91 aa).

Transmembrane regions (helical) follow at residues 10–30 and 46–66; these read VLFT…AGGI and LLVA…QALS. The tract at residues 68 to 91 is disordered; the sequence is MRRQDGARGTARAGRNSARRRMPS.

The protein localises to the cell membrane. This is an uncharacterized protein from Sinorhizobium fredii (strain NBRC 101917 / NGR234).